The primary structure comprises 411 residues: 1-deoxy-D-xylulose 5-phosphate reductoisomerase (411 aa).

8 residues coordinate NADPH: threonine 23, glycine 24, serine 25, isoleucine 26, glycine 49, arginine 50, asparagine 51, and asparagine 137. Lysine 138 lines the 1-deoxy-D-xylulose 5-phosphate pocket. Residue glutamate 139 coordinates NADPH. Aspartate 163 is a binding site for Mn(2+). Residues serine 164, glutamate 165, serine 199, and histidine 222 each contribute to the 1-deoxy-D-xylulose 5-phosphate site. Position 165 (glutamate 165) interacts with Mn(2+). Glycine 228 contributes to the NADPH binding site. 1-deoxy-D-xylulose 5-phosphate-binding residues include serine 235, asparagine 240, lysine 241, and glutamate 244. Mn(2+) is bound at residue glutamate 244.

It belongs to the DXR family. Mg(2+) is required as a cofactor. It depends on Mn(2+) as a cofactor.

The catalysed reaction is 2-C-methyl-D-erythritol 4-phosphate + NADP(+) = 1-deoxy-D-xylulose 5-phosphate + NADPH + H(+). It participates in isoprenoid biosynthesis; isopentenyl diphosphate biosynthesis via DXP pathway; isopentenyl diphosphate from 1-deoxy-D-xylulose 5-phosphate: step 1/6. Functionally, catalyzes the NADPH-dependent rearrangement and reduction of 1-deoxy-D-xylulose-5-phosphate (DXP) to 2-C-methyl-D-erythritol 4-phosphate (MEP). This Mannheimia succiniciproducens (strain KCTC 0769BP / MBEL55E) protein is 1-deoxy-D-xylulose 5-phosphate reductoisomerase.